A 395-amino-acid polypeptide reads, in one-letter code: NAD(P)H-quinone oxidoreductase subunit H, chloroplastic (395 aa).

This sequence belongs to the complex I 49 kDa subunit family. As to quaternary structure, NDH is composed of at least 16 different subunits, 5 of which are encoded in the nucleus.

The protein resides in the plastid. The protein localises to the chloroplast thylakoid membrane. The enzyme catalyses a plastoquinone + NADH + (n+1) H(+)(in) = a plastoquinol + NAD(+) + n H(+)(out). It carries out the reaction a plastoquinone + NADPH + (n+1) H(+)(in) = a plastoquinol + NADP(+) + n H(+)(out). In terms of biological role, NDH shuttles electrons from NAD(P)H:plastoquinone, via FMN and iron-sulfur (Fe-S) centers, to quinones in the photosynthetic chain and possibly in a chloroplast respiratory chain. The immediate electron acceptor for the enzyme in this species is believed to be plastoquinone. Couples the redox reaction to proton translocation, and thus conserves the redox energy in a proton gradient. The sequence is that of NAD(P)H-quinone oxidoreductase subunit H, chloroplastic from Dioscorea elephantipes (Elephant's foot yam).